Reading from the N-terminus, the 203-residue chain is A-type ATP synthase subunit E (203 aa).

Belongs to the V-ATPase E subunit family. As to quaternary structure, has multiple subunits with at least A(3), B(3), C, D, E, F, H, I and proteolipid K(x).

The protein resides in the cell membrane. Functionally, component of the A-type ATP synthase that produces ATP from ADP in the presence of a proton gradient across the membrane. The sequence is that of A-type ATP synthase subunit E from Thermococcus kodakarensis (strain ATCC BAA-918 / JCM 12380 / KOD1) (Pyrococcus kodakaraensis (strain KOD1)).